A 365-amino-acid chain; its full sequence is Peptide chain release factor 2 (365 aa).

Gln252 bears the N5-methylglutamine mark.

It belongs to the prokaryotic/mitochondrial release factor family. Methylated by PrmC. Methylation increases the termination efficiency of RF2.

It is found in the cytoplasm. Its function is as follows. Peptide chain release factor 2 directs the termination of translation in response to the peptide chain termination codons UGA and UAA. The chain is Peptide chain release factor 2 (prfB) from Salmonella typhimurium (strain LT2 / SGSC1412 / ATCC 700720).